Reading from the N-terminus, the 439-residue chain is Agnestins biosynthesis cluster transcriptional coactivator AgnL9 (439 aa).

Residues 79-149 (MTIQTQLLAC…EPGHITHSAL (71 aa)) enclose the HTH iclR-type domain. The H-T-H motif DNA-binding region spans 109 to 128 (MKDVSELIDVPENQLGRIVR).

It localises to the nucleus. Functionally, transcriptional coactivator; part of the gene cluster that mediates the biosynthesis of agnestins, dihydroxy-xanthone metabolites. This Paecilomyces divaricatus (Penicillium divaricatum) protein is Agnestins biosynthesis cluster transcriptional coactivator AgnL9.